The sequence spans 190 residues: Orotate phosphoribosyltransferase (190 aa).

114–122 (EDVITTGGS) is a binding site for 5-phospho-alpha-D-ribose 1-diphosphate. Orotate-binding residues include Thr-118 and Arg-146.

This sequence belongs to the purine/pyrimidine phosphoribosyltransferase family. PyrE subfamily. Homodimer. Mg(2+) serves as cofactor.

It catalyses the reaction orotidine 5'-phosphate + diphosphate = orotate + 5-phospho-alpha-D-ribose 1-diphosphate. It participates in pyrimidine metabolism; UMP biosynthesis via de novo pathway; UMP from orotate: step 1/2. Its function is as follows. Catalyzes the transfer of a ribosyl phosphate group from 5-phosphoribose 1-diphosphate to orotate, leading to the formation of orotidine monophosphate (OMP). The protein is Orotate phosphoribosyltransferase of Pelotomaculum thermopropionicum (strain DSM 13744 / JCM 10971 / SI).